Consider the following 896-residue polypeptide: Translation initiation factor IF-2 (896 aa).

A disordered region spans residues 32–306 (LAQAGSSDTK…HKTKKQSEEH (275 aa)). 2 stretches are compositionally biased toward polar residues: residues 35–48 (AGSS…VSKA) and 114–126 (ADST…SSQE). Basic and acidic residues predominate over residues 156 to 170 (ARNEETPIIRTRTEP). Polar residues predominate over residues 213-237 (QQTRPSVETASTKQQQPSGTNTRPA). Basic and acidic residues predominate over residues 256 to 280 (RGPDRDRTKRSDENVKAFTGRDRYG). The 170-residue stretch at 401 to 570 (IRSPIVAFMG…ALQAEVLELK (170 aa)) folds into the tr-type G domain. Residues 410 to 417 (GHVDHGKT) are G1. A GTP-binding site is contributed by 410–417 (GHVDHGKT). The tract at residues 435–439 (AITQH) is G2. The tract at residues 456–459 (DTPG) is G3. GTP contacts are provided by residues 456–460 (DTPGH) and 510–513 (NKCD). The G4 stretch occupies residues 510–513 (NKCD). The segment at 546–548 (SAK) is G5.

The protein belongs to the TRAFAC class translation factor GTPase superfamily. Classic translation factor GTPase family. IF-2 subfamily.

The protein resides in the cytoplasm. In terms of biological role, one of the essential components for the initiation of protein synthesis. Protects formylmethionyl-tRNA from spontaneous hydrolysis and promotes its binding to the 30S ribosomal subunits. Also involved in the hydrolysis of GTP during the formation of the 70S ribosomal complex. In Chlamydia muridarum (strain MoPn / Nigg), this protein is Translation initiation factor IF-2 (infB).